The chain runs to 530 residues: Arginine-containing cyclodipeptide synthase pthA (530 aa).

A Conserved DDXXE motif motif is present at residues 419-423 (DDRAE).

It belongs to the arginine-containing cyclodipeptide synthase family.

The enzyme catalyses L-aspartyl-tRNA(Asp) + L-arginyl-tRNA(Arg) = cyclo(L-arginyl-L-aspartyl) + tRNA(Asp) + tRNA(Arg) + 2 H(+). It participates in secondary metabolite biosynthesis. Arginine-containing cyclodipeptide synthase; part of the cluster that mediates the biosynthesis of a highly modified cyclo-arginine-aspartate dipeptide (cRD). Within the pathway, pthA acts as the scaffold-generating enzyme and is responsible for formation of the cyclo-Arg-Asp diketopiperazine (cRW) from L-arginyl-tRNA(Arg) + L-aspartyl-tRNA(Asp). Additional enzymes from the cluster then further modify the cyclo-Arg-Asp diketopiperazine (cRW) scaffold. The polypeptide is Arginine-containing cyclodipeptide synthase pthA (Penicillium thymicola).